The sequence spans 471 residues: Glutamate--tRNA ligase (471 aa).

Positions 9–19 (PSPTGYLHVGG) match the 'HIGH' region motif. Positions 98, 100, 125, and 127 each coordinate Zn(2+). The 'KMSKS' region signature appears at 237 to 241 (KLSKR). Residue lysine 240 participates in ATP binding.

It belongs to the class-I aminoacyl-tRNA synthetase family. Glutamate--tRNA ligase type 1 subfamily. As to quaternary structure, monomer. Zn(2+) is required as a cofactor.

The protein resides in the cytoplasm. It carries out the reaction tRNA(Glu) + L-glutamate + ATP = L-glutamyl-tRNA(Glu) + AMP + diphosphate. Its function is as follows. Catalyzes the attachment of glutamate to tRNA(Glu) in a two-step reaction: glutamate is first activated by ATP to form Glu-AMP and then transferred to the acceptor end of tRNA(Glu). This Yersinia enterocolitica serotype O:8 / biotype 1B (strain NCTC 13174 / 8081) protein is Glutamate--tRNA ligase.